Reading from the N-terminus, the 153-residue chain is MKTFVLHIFIFAFVAFASASRDSAKKIGSQYDNYETCLTEHGLTDDDIFSIGEVSSGQHKTNHEDTELHKNGCVMQCMLEKDGLMSGADYDEEKMREDYIKETGAQPGDQRIEALNTCMQETKDMEDKCDKSLILVACVLAAEAVLADSSEGA.

Positions 1 to 19 are cleaved as a signal peptide; it reads MKTFVLHIFIFAFVAFASA. Cystine bridges form between Cys-37–Cys-77, Cys-73–Cys-129, and Cys-118–Cys-138.

Belongs to the PBP/GOBP family. As to quaternary structure, homodimer.

It is found in the secreted. In terms of biological role, colony queen number, a major feature of social organization, is associated with worker genotype for Gp-9. Colonies are headed by either a single reproductive queen (monogyne form) or multiple queens (polygyne form). Differences in worker Gp-9 genotypes between social forms may cause differences in workers' abilities to recognize queens and regulate their numbers. This is Pheromone-binding protein Gp-9 from Solenopsis amblychila (Desert fire ant).